A 159-amino-acid polypeptide reads, in one-letter code: Phosphoribosylaminoimidazole carboxylase (159 aa).

Substrate contacts are provided by S11, D14, S38, K41, G67, and S69.

The enzyme catalyses 5-amino-1-(5-phospho-D-ribosyl)imidazole-4-carboxylate + H(+) = 5-amino-1-(5-phospho-beta-D-ribosyl)imidazole + CO2. It functions in the pathway purine metabolism; IMP biosynthesis via de novo pathway; 5-amino-1-(5-phospho-D-ribosyl)imidazole-4-carboxylate from 5-amino-1-(5-phospho-D-ribosyl)imidazole (carboxylase route): step 1/1. Its function is as follows. Catalyzes the reversible conversion of 5-aminoimidazole ribonucleotide (AIR) and CO(2) to 4-carboxy-5-aminoimidazole ribonucleotide (CAIR). Does not accept N5-carboxyaminoimidazole ribonucleotide (N5-CAIR) as a substrate. In Treponema denticola (strain ATCC 35405 / DSM 14222 / CIP 103919 / JCM 8153 / KCTC 15104), this protein is Phosphoribosylaminoimidazole carboxylase.